The following is a 430-amino-acid chain: GTPase Obg (430 aa).

An Obg domain is found at 1 to 158; it reads MFVDQVKISL…LEVTLELKLL (158 aa). Residues 118-145 form a disordered region; the sequence is RGGRGGRGNSRFATPRNPAPDFSENGEP. Residues 159–329 form the OBG-type G domain; it reads ADVGLVGFPS…LLYQIADKLE (171 aa). Residues 165–172, 190–194, 212–215, 282–285, and 310–312 contribute to the GTP site; these read GFPSVGKS, FTTIK, DLPG, NKMD, and STI. Ser-172 and Thr-192 together coordinate Mg(2+). The region spanning 352-430 is the OCT domain; sequence KHTPSADKFT…ILGGEFEFVE (79 aa).

The protein belongs to the TRAFAC class OBG-HflX-like GTPase superfamily. OBG GTPase family. As to quaternary structure, monomer. The cofactor is Mg(2+).

It is found in the cytoplasm. In terms of biological role, an essential GTPase which binds GTP, GDP and possibly (p)ppGpp with moderate affinity, with high nucleotide exchange rates and a fairly low GTP hydrolysis rate. Plays a role in control of the cell cycle, stress response, ribosome biogenesis and in those bacteria that undergo differentiation, in morphogenesis control. The polypeptide is GTPase Obg (Staphylococcus epidermidis (strain ATCC 12228 / FDA PCI 1200)).